A 207-amino-acid polypeptide reads, in one-letter code: A-type ATP synthase subunit E (207 aa).

Belongs to the V-ATPase E subunit family. In terms of assembly, has multiple subunits with at least A(3), B(3), C, D, E, F, H, I and proteolipid K(x).

It localises to the cell membrane. Component of the A-type ATP synthase that produces ATP from ADP in the presence of a proton gradient across the membrane. This Hyperthermus butylicus (strain DSM 5456 / JCM 9403 / PLM1-5) protein is A-type ATP synthase subunit E.